Consider the following 128-residue polypeptide: Large ribosomal subunit protein bL12 (128 aa).

It belongs to the bacterial ribosomal protein bL12 family. In terms of assembly, homodimer. Part of the ribosomal stalk of the 50S ribosomal subunit. Forms a multimeric L10(L12)X complex, where L10 forms an elongated spine to which 2 to 4 L12 dimers bind in a sequential fashion. Binds GTP-bound translation factors.

Its function is as follows. Forms part of the ribosomal stalk which helps the ribosome interact with GTP-bound translation factors. Is thus essential for accurate translation. This chain is Large ribosomal subunit protein bL12, found in Saccharopolyspora erythraea (strain ATCC 11635 / DSM 40517 / JCM 4748 / NBRC 13426 / NCIMB 8594 / NRRL 2338).